A 33-amino-acid chain; its full sequence is MSDINATRLPIIWAPVVPCISDDNDSTLTRGQR.

A propeptide spanning residues 1-10 (MSDINATRLP) is cleaved from the precursor. Residues 11-18 (IIWAPVVP) constitute a cross-link (cyclopeptide (Ile-Pro)). The propeptide occupies 19–33 (CISDDNDSTLTRGQR).

This sequence belongs to the MSDIN fungal toxin family. Processed by the macrocyclase-peptidase enzyme POPB to yield a toxic cyclic octapeptide. POPB first removes 10 residues from the N-terminus. Conformational trapping of the remaining peptide forces the enzyme to release this intermediate rather than proceed to macrocyclization. The enzyme rebinds the remaining peptide in a different conformation and catalyzes macrocyclization of the N-terminal 8 residues.

Its function is as follows. Probable toxin that belongs to the MSDIN-like toxin family responsible for a large number of food poisoning cases and deaths. This Amanita fuliginea (East Asian brown death cap) protein is MSDIN-like toxin proprotein 1.